Here is a 384-residue protein sequence, read N- to C-terminus: F-box/kelch-repeat protein At1g64840 (384 aa).

Positions 3-51 constitute an F-box domain; it reads PNWSQLPEELLNLISKNLDNCFDVVHARSICRSWRSAFPFPSSLSTLSY. Kelch repeat units lie at residues 87 to 137 and 259 to 309; these read PEYF…PLGF and NPFP…CCSA.

The chain is F-box/kelch-repeat protein At1g64840 from Arabidopsis thaliana (Mouse-ear cress).